The primary structure comprises 243 residues: MAGSGSSAPWGKHLLHAVLMVLVALVLLHSALAQSHRDFAPPGQQRREAPVDLLTQIGRSVRETLDTWIGPETMHLISETLSQVMWAISSAISVAFFALSGIAAQLLTALGLDGDHLTQGLKLSPSQVQTFLLWGAGALVVYWLLSLLLGLVLAVLGRILGGLKLVIFLAGFVALVRSVPDPSTRALLLLALLTLYALLSRLTGSRASGAQLEAKVRGLERQVDELRWRQRRAAKGARSVEEE.

The signal sequence occupies residues 1 to 33; the sequence is MAGSGSSAPWGKHLLHAVLMVLVALVLLHSALA. Residues 34–83 are Lumenal-facing; the sequence is QSHRDFAPPGQQRREAPVDLLTQIGRSVRETLDTWIGPETMHLISETLSQ. The chain crosses the membrane as a helical span at residues 84-104; sequence VMWAISSAISVAFFALSGIAA. Over 105-135 the chain is Cytoplasmic; that stretch reads QLLTALGLDGDHLTQGLKLSPSQVQTFLLWG. A helical transmembrane segment spans residues 136–156; that stretch reads AGALVVYWLLSLLLGLVLAVL. The Lumenal segment spans residues 157-185; sequence GRILGGLKLVIFLAGFVALVRSVPDPSTR. The chain crosses the membrane as a helical span at residues 186 to 205; it reads ALLLLALLTLYALLSRLTGS. The Cytoplasmic portion of the chain corresponds to 206–243; sequence RASGAQLEAKVRGLERQVDELRWRQRRAAKGARSVEEE.

Homooligomer. Interacts with CRYAB; in the cellular response to DNA damage. Post-translationally, the N-terminus is blocked. Widely expressed. Expressed in skeletal, cardiac and smooth muscle cells, in brain, including neuroglial cells, cerebral cortex neurons and cerebellum, but not Purkinje cells. Also detected in Paneth and Goblet cells of the small intestine (but not in the epithelium), duodenal gland, pancreas, parotid gland, testis, thyroid gland and adrenal gland, as well as in epidermis, choroid plexus, ductus epididymidis, lymphocytes, fibroblasts, endothelial cells and seminiferous epithelial cells (at protein level). Not detected in mucous cells of the duodenal gland, in hepatocytes nor in uriniferous tubules.

Its subcellular location is the nucleus outer membrane. The protein localises to the endoplasmic reticulum membrane. It is found in the sarcoplasmic reticulum membrane. It carries out the reaction K(+)(in) = K(+)(out). The enzyme catalyses Ca(2+)(in) = Ca(2+)(out). Functionally, functions as a voltage-gated monoatomic cation channel permeable to both potassium and calcium. Plays a role in the cellular response to DNA damage. The sequence is that of Voltage-gated monoatomic cation channel TMEM109 from Oryctolagus cuniculus (Rabbit).